The sequence spans 141 residues: Probable mitochondrial pyruvate carrier 1 (141 aa).

Transmembrane regions (helical) follow at residues 31–52 and 60–82; these read YLCS…AAIL and LISG…YAWM.

The protein belongs to the mitochondrial pyruvate carrier (MPC) (TC 2.A.105) family. The functional 150 kDa pyruvate import complex is a heteromer of mpc1 and mpc2.

The protein localises to the mitochondrion. It localises to the mitochondrion inner membrane. In terms of biological role, mediates the uptake of pyruvate into mitochondria. The chain is Probable mitochondrial pyruvate carrier 1 from Schizosaccharomyces pombe (strain 972 / ATCC 24843) (Fission yeast).